The chain runs to 426 residues: Glutamate-1-semialdehyde 2,1-aminomutase (426 aa).

Lys265 bears the N6-(pyridoxal phosphate)lysine mark.

This sequence belongs to the class-III pyridoxal-phosphate-dependent aminotransferase family. HemL subfamily. As to quaternary structure, homodimer. Pyridoxal 5'-phosphate serves as cofactor.

It is found in the cytoplasm. The catalysed reaction is (S)-4-amino-5-oxopentanoate = 5-aminolevulinate. Its pathway is porphyrin-containing compound metabolism; protoporphyrin-IX biosynthesis; 5-aminolevulinate from L-glutamyl-tRNA(Glu): step 2/2. In Neisseria gonorrhoeae (strain ATCC 700825 / FA 1090), this protein is Glutamate-1-semialdehyde 2,1-aminomutase.